Reading from the N-terminus, the 270-residue chain is Formamidopyrimidine-DNA glycosylase (270 aa).

The active-site Schiff-base intermediate with DNA is the P2. The active-site Proton donor is the E3. K58 (proton donor; for beta-elimination activity) is an active-site residue. H91, R109, and R151 together coordinate DNA. The FPG-type zinc finger occupies 236–270 (QVYGKTGQQCPSCETPLKAVKLAARASVYCPECQS). The active-site Proton donor; for delta-elimination activity is the R260.

Belongs to the FPG family. In terms of assembly, monomer. The cofactor is Zn(2+).

The catalysed reaction is Hydrolysis of DNA containing ring-opened 7-methylguanine residues, releasing 2,6-diamino-4-hydroxy-5-(N-methyl)formamidopyrimidine.. It carries out the reaction 2'-deoxyribonucleotide-(2'-deoxyribose 5'-phosphate)-2'-deoxyribonucleotide-DNA = a 3'-end 2'-deoxyribonucleotide-(2,3-dehydro-2,3-deoxyribose 5'-phosphate)-DNA + a 5'-end 5'-phospho-2'-deoxyribonucleoside-DNA + H(+). Involved in base excision repair of DNA damaged by oxidation or by mutagenic agents. Acts as a DNA glycosylase that recognizes and removes damaged bases. Has a preference for oxidized purines, such as 7,8-dihydro-8-oxoguanine (8-oxoG). Has AP (apurinic/apyrimidinic) lyase activity and introduces nicks in the DNA strand. Cleaves the DNA backbone by beta-delta elimination to generate a single-strand break at the site of the removed base with both 3'- and 5'-phosphates. This is Formamidopyrimidine-DNA glycosylase from Psychromonas ingrahamii (strain DSM 17664 / CCUG 51855 / 37).